The primary structure comprises 487 residues: N-succinylglutamate 5-semialdehyde dehydrogenase (487 aa).

221–226 (GSSRTG) provides a ligand contact to NAD(+). Residues glutamate 244 and cysteine 278 contribute to the active site.

This sequence belongs to the aldehyde dehydrogenase family. AstD subfamily.

It carries out the reaction N-succinyl-L-glutamate 5-semialdehyde + NAD(+) + H2O = N-succinyl-L-glutamate + NADH + 2 H(+). It participates in amino-acid degradation; L-arginine degradation via AST pathway; L-glutamate and succinate from L-arginine: step 4/5. Catalyzes the NAD-dependent reduction of succinylglutamate semialdehyde into succinylglutamate. The sequence is that of N-succinylglutamate 5-semialdehyde dehydrogenase from Ectopseudomonas mendocina (strain ymp) (Pseudomonas mendocina).